A 308-amino-acid polypeptide reads, in one-letter code: D-alanine--D-alanine ligase (308 aa).

The region spanning 102–302 is the ATP-grasp domain; the sequence is KKVAAAAGIP…FGDLVSWMVE (201 aa). 128–183 provides a ligand contact to ATP; it reads PLQPPYVVKPVREGSSFGVVIVKEDQSHPPQILTSSEWPFGNQVMVERYIHGRELT. Mg(2+)-binding residues include Asp252, Glu269, and Asn271.

This sequence belongs to the D-alanine--D-alanine ligase family. Requires Mg(2+) as cofactor. Mn(2+) serves as cofactor.

The protein localises to the cytoplasm. It catalyses the reaction 2 D-alanine + ATP = D-alanyl-D-alanine + ADP + phosphate + H(+). Its pathway is cell wall biogenesis; peptidoglycan biosynthesis. Functionally, cell wall formation. This chain is D-alanine--D-alanine ligase, found in Agrobacterium fabrum (strain C58 / ATCC 33970) (Agrobacterium tumefaciens (strain C58)).